We begin with the raw amino-acid sequence, 149 residues long: Large ribosomal subunit protein uL11 (149 aa).

It belongs to the universal ribosomal protein uL11 family. Part of the ribosomal stalk of the 50S ribosomal subunit. Interacts with L10 and the large rRNA to form the base of the stalk. L10 forms an elongated spine to which L12 dimers bind in a sequential fashion forming a multimeric L10(L12)X complex. One or more lysine residues are methylated.

Forms part of the ribosomal stalk which helps the ribosome interact with GTP-bound translation factors. The chain is Large ribosomal subunit protein uL11 from Methylobacterium sp. (strain 4-46).